The chain runs to 64 residues: MFLRYFLDENQQRVYTLKRTAPSGEQTLTAHPARFSPEDKNSKYRIIIKKRFGLLPTQKAKTVC.

Belongs to the NOP10 family. Component of the small nucleolar ribonucleoprotein particles containing H/ACA-type snoRNAs (H/ACA snoRNPs).

It localises to the nucleus. Its subcellular location is the nucleolus. Required for ribosome biogenesis. Part of a complex which catalyzes pseudouridylation of rRNA. This involves the isomerization of uridine such that the ribose is subsequently attached to C5, instead of the normal N1. Pseudouridine ('psi') residues may serve to stabilize the conformation of rRNAs. This Caenorhabditis elegans protein is Putative H/ACA ribonucleoprotein complex subunit 3 (nola-3).